The chain runs to 447 residues: N-succinylarginine dihydrolase (447 aa).

Substrate contacts are provided by residues 19 to 28 (AGLSFGNEAS), N110, and 137 to 138 (HR). E174 is an active-site residue. Position 212 (R212) interacts with substrate. The active site involves H248. 2 residues coordinate substrate: D250 and N359. C365 functions as the Nucleophile in the catalytic mechanism.

It belongs to the succinylarginine dihydrolase family. In terms of assembly, homodimer.

The enzyme catalyses N(2)-succinyl-L-arginine + 2 H2O + 2 H(+) = N(2)-succinyl-L-ornithine + 2 NH4(+) + CO2. The protein operates within amino-acid degradation; L-arginine degradation via AST pathway; L-glutamate and succinate from L-arginine: step 2/5. Functionally, catalyzes the hydrolysis of N(2)-succinylarginine into N(2)-succinylornithine, ammonia and CO(2). This chain is N-succinylarginine dihydrolase, found in Salmonella typhimurium (strain LT2 / SGSC1412 / ATCC 700720).